The sequence spans 256 residues: Hydroxyacylglutathione hydrolase (256 aa).

Zn(2+) contacts are provided by H55, H57, D59, H60, H113, D130, and H168.

Belongs to the metallo-beta-lactamase superfamily. Glyoxalase II family. In terms of assembly, monomer. It depends on Zn(2+) as a cofactor.

It carries out the reaction an S-(2-hydroxyacyl)glutathione + H2O = a 2-hydroxy carboxylate + glutathione + H(+). It participates in secondary metabolite metabolism; methylglyoxal degradation; (R)-lactate from methylglyoxal: step 2/2. Thiolesterase that catalyzes the hydrolysis of S-D-lactoyl-glutathione to form glutathione and D-lactic acid. The sequence is that of Hydroxyacylglutathione hydrolase from Alkalilimnicola ehrlichii (strain ATCC BAA-1101 / DSM 17681 / MLHE-1).